The chain runs to 1157 residues: Hephaestin (1157 aa).

The N-terminal stretch at 1 to 18 is a signal peptide; sequence MKAGHLLWALLLMHSLWS. The Extracellular segment spans residues 19 to 1109; it reads IPTDGAIRNY…PIKDVEILSS (1091 aa). Plastocyanin-like domains are found at residues 24–206, 218–366, 370–559, 569–717, 730–902, and 910–1066; these read AIRN…LITC, QRKD…VDSC, PPVD…LLVC, KQKG…VSQC, ASRV…LVIC, and NGGR…SHEE. N-linked (GlcNAc...) asparagine glycosylation is found at Asn-49 and Asn-54. Positions 70 and 73 each coordinate Na(+). 2 residues coordinate Cu(2+): His-126 and His-128. His-126 contributes to the O2 binding site. Positions 134, 152, and 153 each coordinate Ca(2+). Asn-164 carries an N-linked (GlcNAc...) asparagine glycan. A disulfide bridge connects residues Cys-180 and Cys-206. Residues His-186 and His-188 each coordinate Cu(2+). Residue His-186 participates in O2 binding. An N-linked (GlcNAc...) asparagine glycan is attached at Asn-236. Ser-265 is a Na(+) binding site. A disulfide bridge links Cys-285 with Cys-366. Cu(2+)-binding residues include His-304, Cys-347, and His-352. Tyr-416, Gly-425, and Tyr-428 together coordinate Na(+). A disulfide bond links Cys-533 and Cys-559. Asn-587 is a glycosylation site (N-linked (GlcNAc...) asparagine). Ser-616 lines the Na(+) pocket. The cysteines at positions 636 and 717 are disulfide-linked. Residues His-655, Cys-698, His-703, and Met-708 each contribute to the Cu(2+) site. N-linked (GlcNAc...) asparagine glycosylation is found at Asn-713 and Asn-757. Na(+) is bound by residues Phe-768 and Gly-777. Cys-876 and Cys-902 are joined by a disulfide. Asn-930 carries an N-linked (GlcNAc...) asparagine glycan. Cu(2+) is bound by residues His-999, His-1002, His-1004, His-1044, Cys-1045, His-1046, His-1050, and Met-1055. Positions 1002 and 1004 each coordinate O2. O2 is bound at residue His-1046. The chain crosses the membrane as a helical span at residues 1110-1130; the sequence is ALIAICVLLLLIALALGGVVW. Residues 1131–1157 are Cytoplasmic-facing; that stretch reads YQHRQRKLRRNRRSILDDSFKLLSLKQ. Phosphoserine occurs at positions 1144, 1149, and 1154.

Belongs to the multicopper oxidase family. In terms of assembly, part of a complex composed of SLC40A1/ferroportin, TF/transferrin and HEPH/hephaestin that transfers iron from cells to transferrin. Cu cation is required as a cofactor.

The protein localises to the basolateral cell membrane. It carries out the reaction 4 Fe(2+) + O2 + 4 H(+) = 4 Fe(3+) + 2 H2O. Plasma membrane ferroxidase that mediates the extracellular conversion of ferrous/Fe(2+) iron into its ferric/Fe(3+) form. Couples ferroportin which specifically exports ferrous/Fe(2+) iron from cells to transferrin that only binds and shuttles extracellular ferric/Fe(3+) iron throughout the body. By helping iron transfer from cells to blood mainly contributes to dietary iron absorption by the intestinal epithelium and more generally regulates iron levels in the body. This is Hephaestin from Mus musculus (Mouse).